A 453-amino-acid chain; its full sequence is Probable exopolygalacturonase B (453 aa).

Positions 1–16 are cleaved as a signal peptide; it reads MKFFALAALFASTVNS. N-linked (GlcNAc...) asparagine glycans are attached at residues N185 and N225. D255 functions as the Proton donor in the catalytic mechanism. C257 and C274 are oxidised to a cystine. N263 and N275 each carry an N-linked (GlcNAc...) asparagine glycan. H278 is an active-site residue. PbH1 repeat units follow at residues 295 to 316 and 327 to 348; these read IENV…RLKA and INNV…VLDQ. Residues N302, N329, N354, and N366 are each glycosylated (N-linked (GlcNAc...) asparagine). Residues 362-405 form a PbH1 3 repeat; it reads PSRVNFTNIVFEDIYGTSSGKRGKVVADLTCSPNAVCSGIRLKN. C392 and C398 are joined by a disulfide. The N-linked (GlcNAc...) asparagine glycan is linked to N436.

It belongs to the glycosyl hydrolase 28 family.

The protein localises to the secreted. The catalysed reaction is [(1-&gt;4)-alpha-D-galacturonosyl](n) + H2O = alpha-D-galacturonate + [(1-&gt;4)-alpha-D-galacturonosyl](n-1). In terms of biological role, specific in hydrolyzing the terminal glycosidic bond of polygalacturonic acid and oligogalacturonates. The protein is Probable exopolygalacturonase B (pgxB) of Aspergillus fumigatus (strain ATCC MYA-4609 / CBS 101355 / FGSC A1100 / Af293) (Neosartorya fumigata).